A 299-amino-acid chain; its full sequence is tRNA dimethylallyltransferase (299 aa).

ATP is bound at residue 13-20; the sequence is GPTASGKT. Position 15–20 (15–20) interacts with substrate; sequence TASGKT. The interval 38 to 41 is interaction with substrate tRNA; it reads DSRQ.

Belongs to the IPP transferase family. Monomer. The cofactor is Mg(2+).

The enzyme catalyses adenosine(37) in tRNA + dimethylallyl diphosphate = N(6)-dimethylallyladenosine(37) in tRNA + diphosphate. Functionally, catalyzes the transfer of a dimethylallyl group onto the adenine at position 37 in tRNAs that read codons beginning with uridine, leading to the formation of N6-(dimethylallyl)adenosine (i(6)A). This chain is tRNA dimethylallyltransferase, found in Parasynechococcus marenigrum (strain WH8102).